A 341-amino-acid polypeptide reads, in one-letter code: Phenylalanine--tRNA ligase alpha subunit (341 aa).

Glu-254 serves as a coordination point for Mg(2+).

It belongs to the class-II aminoacyl-tRNA synthetase family. Phe-tRNA synthetase alpha subunit type 1 subfamily. In terms of assembly, tetramer of two alpha and two beta subunits. Requires Mg(2+) as cofactor.

It localises to the cytoplasm. It catalyses the reaction tRNA(Phe) + L-phenylalanine + ATP = L-phenylalanyl-tRNA(Phe) + AMP + diphosphate + H(+). This chain is Phenylalanine--tRNA ligase alpha subunit, found in Chlorobaculum tepidum (strain ATCC 49652 / DSM 12025 / NBRC 103806 / TLS) (Chlorobium tepidum).